Here is a 463-residue protein sequence, read N- to C-terminus: L-seryl-tRNA(Sec) selenium transferase (463 aa).

At K295 the chain carries N6-(pyridoxal phosphate)lysine.

This sequence belongs to the SelA family. As to quaternary structure, homodecamer; pentamer of dimers. Binds only one seryl-tRNA(Sec) per dimer. It depends on pyridoxal 5'-phosphate as a cofactor.

The protein localises to the cytoplasm. The catalysed reaction is L-seryl-tRNA(Sec) + selenophosphate + H(+) = L-selenocysteinyl-tRNA(Sec) + phosphate. It functions in the pathway aminoacyl-tRNA biosynthesis; selenocysteinyl-tRNA(Sec) biosynthesis; selenocysteinyl-tRNA(Sec) from L-seryl-tRNA(Sec) (bacterial route): step 1/1. In terms of biological role, converts seryl-tRNA(Sec) to selenocysteinyl-tRNA(Sec) required for selenoprotein biosynthesis. This chain is L-seryl-tRNA(Sec) selenium transferase, found in Edwardsiella ictaluri (strain 93-146).